We begin with the raw amino-acid sequence, 203 residues long: LexA repressor 2 (203 aa).

Positions 28–48 form a DNA-binding region, H-T-H motif; it reads MREIARHLNVNGTLGVAKHLE. Catalysis depends on for autocatalytic cleavage activity residues Ser-122 and Lys-159.

It belongs to the peptidase S24 family. As to quaternary structure, homodimer.

The catalysed reaction is Hydrolysis of Ala-|-Gly bond in repressor LexA.. Represses a number of genes involved in the response to DNA damage (SOS response), including recA and lexA. In the presence of single-stranded DNA, RecA interacts with LexA causing an autocatalytic cleavage which disrupts the DNA-binding part of LexA, leading to derepression of the SOS regulon and eventually DNA repair. This Geobacter sulfurreducens (strain ATCC 51573 / DSM 12127 / PCA) protein is LexA repressor 2.